The chain runs to 1883 residues: AF4/FMR2 family member lilli (1883 aa).

Over residues 1–45 (MAQQQQQQHLQQQQQQHHQQQQLQQLQQQQQLPQYNNNLYNLNYN) the composition is skewed to low complexity. Disordered regions lie at residues 1 to 88 (MAQQ…SEGD), 140 to 311 (INST…EKDI), 329 to 381 (SIAA…SCTT), 449 to 540 (MPTP…HHQH), 609 to 654 (LGGG…HLSR), 796 to 827 (SISSGSASGSSSSDSAAGEVVPLPGPGETLQI), 844 to 901 (MQQK…KKHA), 922 to 962 (TAAA…LAKG), 992 to 1018 (VAGSRKREHSSNSSSNGNTPTKKLHAA), 1039 to 1075 (TAAAGSSSDEDSTSSSCSSTKSSNSSSSGSDSEATAT), 1115 to 1145 (KNNRLYGAGSSSNSSSSETEEQQQQQQQHKQ), 1170 to 1238 (QHQQ…KSDK), 1358 to 1413 (YAAE…GART), 1450 to 1510 (EHGV…DQVS), 1543 to 1583 (ANGS…KATT), 1595 to 1641 (QTST…PPSD), and 1783 to 1803 (PSNSVGSQGSGSNTPPGRIVP). Residues 57-80 (REKYERQQGIQSDDRETSLFEAPR) show a composition bias toward basic and acidic residues. 4 stretches are compositionally biased toward low complexity: residues 140-154 (INSTTTTSSSASLLP), 161-178 (QQQQQQQQQQQQHYQQQQ), 223-253 (SASSSSSASNNNSSSATNNATAAAATSASTA), and 362-381 (PLNSPPAASGASSSSLSCTT). Residues 450-462 (PTPPKASPTPPTA) show a composition bias toward pro residues. Thr-458 is modified (phosphothreonine). Residues 466–479 (LKSEKNHSLEKQDS) show a composition bias toward basic and acidic residues. Residues 481–491 (LENDLELSESD) are compositionally biased toward acidic residues. Ser-488 and Ser-490 each carry phosphoserine. Over residues 500–540 (SAGNSSNSSETDSSESGSEASSKGEAQQQQQQQQQLLHHQH) the composition is skewed to low complexity. The span at 609–625 (LGGGGGSGSTGGGGGSS) shows a compositional bias: gly residues. Composition is skewed to low complexity over residues 626–639 (SSGMGNMSSSSSSN) and 796–813 (SISSGSASGSSSSDSAAG). The segment covering 867–877 (PRQKKPRKKKM) has biased composition (basic residues). Ser-887 and Ser-888 each carry phosphoserine. Positions 930 to 942 (KKGRGRPRKQQQQ) form a DNA-binding region, a.T hook. A compositionally biased stretch (low complexity) spans 939–962 (QQQQLQQTQSGNLSSASAGSLAKG). Phosphoserine occurs at positions 953 and 955. Low complexity-rich tracts occupy residues 1124-1145 (SSSNSSSSETEEQQQQQQQHKQ), 1170-1186 (QHQQQQPLQPQQQQQQQ), 1200-1222 (SSSSDGSSSSSTDSSSTNSSSSS), 1362-1376 (QQQQQQQHLHTQQLH), and 1385-1399 (HYQQQHQPHQQKAQQ). Over residues 1450-1467 (EHGVKPEPELDAGYEAKY) the composition is skewed to basic and acidic residues. Ser-1546 carries the phosphoserine modification. The residue at position 1548 (Thr-1548) is a Phosphothreonine. 2 stretches are compositionally biased toward low complexity: residues 1558-1583 (QQQQHQQQQQQQQHQPQHQQQLKATT) and 1595-1606 (QTSTTATQQPTT). Positions 1614 to 1625 (TPPPVAPPPPPR) are enriched in pro residues. Residues 1783–1794 (PSNSVGSQGSGS) show a composition bias toward low complexity.

Belongs to the AF4 family.

It localises to the nucleus. Functionally, has a role in transcriptional regulation. Acts in parallel with the Ras/MAPK and the PI3K/PKB pathways in the control of cell identity and cellular growth. Essential for regulation of the cytoskeleton and cell growth but not for cell proliferation or growth rate. Required specifically for the microtubule-based basal transport of lipid droplets. Plays a partially redundant function downstream of Raf in cell fate specification in the developing eye. Pair-rule protein that regulates embryonic cellularization, gastrulation and segmentation. This chain is AF4/FMR2 family member lilli, found in Drosophila grimshawi (Hawaiian fruit fly).